Consider the following 125-residue polypeptide: Glycine cleavage system H protein (125 aa).

A Lipoyl-binding domain is found at 22 to 104 (SYVIGITDFA…YDTGWILKLE (83 aa)). Residue Lys-63 is modified to N6-lipoyllysine.

This sequence belongs to the GcvH family. The glycine cleavage system is composed of four proteins: P, T, L and H. Requires (R)-lipoate as cofactor.

Its function is as follows. The glycine cleavage system catalyzes the degradation of glycine. The H protein shuttles the methylamine group of glycine from the P protein to the T protein. Functionally, is also involved in protein lipoylation via its role as an octanoyl/lipoyl carrier protein intermediate. The sequence is that of Glycine cleavage system H protein from Listeria monocytogenes serotype 4b (strain CLIP80459).